The chain runs to 200 residues: Recombination protein RecR (200 aa).

The C4-type zinc-finger motif lies at cysteine 58 to cysteine 73. The Toprim domain maps to serine 81–serine 177.

It belongs to the RecR family.

May play a role in DNA repair. It seems to be involved in an RecBC-independent recombinational process of DNA repair. It may act with RecF and RecO. The polypeptide is Recombination protein RecR (Limosilactobacillus reuteri (strain DSM 20016) (Lactobacillus reuteri)).